Reading from the N-terminus, the 428-residue chain is GTPase Obg (428 aa).

The region spanning 1-158 (MFVDQVKIYV…RDVILELKVL (158 aa)) is the Obg domain. Residues 159–329 (ADVGLVGFPS…LLFEVANLLE (171 aa)) enclose the OBG-type G domain. Residues 165 to 172 (GFPSVGKS), 190 to 194 (FTTIV), 212 to 215 (DLPG), 282 to 285 (NKMD), and 310 to 312 (SAV) each bind GTP. Residues Ser172 and Thr192 each contribute to the Mg(2+) site. One can recognise an OCT domain in the interval 350–428 (KLETEGVKFD…ILEYEFEFID (79 aa)).

Belongs to the TRAFAC class OBG-HflX-like GTPase superfamily. OBG GTPase family. In terms of assembly, monomer. Requires Mg(2+) as cofactor.

It is found in the cytoplasm. Functionally, an essential GTPase which binds GTP, GDP and possibly (p)ppGpp with moderate affinity, with high nucleotide exchange rates and a fairly low GTP hydrolysis rate. Plays a role in control of the cell cycle, stress response, ribosome biogenesis and in those bacteria that undergo differentiation, in morphogenesis control. The polypeptide is GTPase Obg (Bacillus cereus (strain Q1)).